Consider the following 523-residue polypeptide: MATCFLLRNFCAARPALRPPGRLLREPAGAQRRSYVGGPADLHADLLRGDSFVGGRWLPTPATFPVYDPASGAKLGTVADCGVPEARAAVRAAYDAFSSWKEISVKERSSLLRKWYDLMIQNKDELAKIITAESGKPLKEAQGEILYSAFFLEWFSEEARRVYGDIIYTSAKDKRGLVLKQPVGVASIITPWNFPSAMITRKVGAALAAGCTVVVKPAEDTPYSALALAQLANQAGIPPGVYNVIPCSRTKAKEVGEVLCTDPLVSKISFTGSTATGKILLHHAANSVKRVSMELGGLAPFIVFDSANVDQAVAGAMASKFRNAGQTCVCSNRFLVQRGIHDSFVTKFAEAMKKSLRVGNGFEEGTTQGPLINEKAVEKVEKHVNDAVAKGATVVTGGKRHQSGGNFFEPTLLSNVTRDMLCITEETFGPVAPVIKFDKEEEAVAIANAADVGLAGYFYSQDPAQIWRVAEQLEVGMVGVNEGLISSVECPFGGVKQSGLGREGSKYGIDEYLEVKYVCYGGL.

A mitochondrion-targeting transit peptide spans 1–35 (MATCFLLRNFCAARPALRPPGRLLREPAGAQRRSY). An N6-acetyllysine; alternate modification is found at K114. The residue at position 114 (K114) is an N6-succinyllysine; alternate. An N6-succinyllysine mark is found at K123 and K172. Residues R201 and 216–219 (KPAE) contribute to the NAD(+) site. R201 provides a ligand contact to substrate. N6-acetyllysine; alternate is present on K253. K253 is subject to N6-succinyllysine; alternate. 272–277 (GSTATG) is a binding site for NAD(+). The active-site Proton acceptor is E294. Residue R322 coordinates substrate. The active-site Nucleophile is the C328. C328 and C330 form a disulfide bridge. N6-acetyllysine is present on K353. K390 bears the N6-succinyllysine mark. Residue K399 is modified to N6-acetyllysine. Residue S486 participates in substrate binding. S487 bears the Phosphoserine mark.

This sequence belongs to the aldehyde dehydrogenase family. As to quaternary structure, homotetramer. Brain, pancreas, heart, liver, skeletal muscle, kidney. Lower in spleen, lung, kidney and testis.

It localises to the mitochondrion. The catalysed reaction is succinate semialdehyde + NAD(+) + H2O = succinate + NADH + 2 H(+). It functions in the pathway amino-acid degradation; 4-aminobutanoate degradation. With respect to regulation, redox-regulated. Inhibited under oxydizing conditions. Its function is as follows. Catalyzes one step in the degradation of the inhibitory neurotransmitter gamma-aminobutyric acid (GABA). This chain is Succinate-semialdehyde dehydrogenase, mitochondrial (Aldh5a1), found in Rattus norvegicus (Rat).